Reading from the N-terminus, the 226-residue chain is Imidazoleglycerol-phosphate dehydratase (226 aa).

Residues 23-55 (LTGGPIERPQPSLFASEKGANTAGPDDASQTTA) are disordered.

It belongs to the imidazoleglycerol-phosphate dehydratase family.

The catalysed reaction is D-erythro-1-(imidazol-4-yl)glycerol 3-phosphate = 3-(imidazol-4-yl)-2-oxopropyl phosphate + H2O. The protein operates within amino-acid biosynthesis; L-histidine biosynthesis; L-histidine from 5-phospho-alpha-D-ribose 1-diphosphate: step 6/9. The protein is Imidazoleglycerol-phosphate dehydratase (HIS3) of Maudiozyma humilis (Sour dough yeast).